The sequence spans 676 residues: tRNA 5-methylaminomethyl-2-thiouridine biosynthesis bifunctional protein MnmC (676 aa).

Positions 1-241 are tRNA (mnm(5)s(2)U34)-methyltransferase; that stretch reads MFTVTPAKIY…KRECLCGIKN (241 aa). Residues 268 to 676 form an FAD-dependent cmnm(5)s(2)U34 oxidoreductase region; the sequence is IGGGIASLFT…RKLLKGTEIK (409 aa).

The protein in the N-terminal section; belongs to the methyltransferase superfamily. tRNA (mnm(5)s(2)U34)-methyltransferase family. This sequence in the C-terminal section; belongs to the DAO family. The cofactor is FAD.

The protein resides in the cytoplasm. It catalyses the reaction 5-aminomethyl-2-thiouridine(34) in tRNA + S-adenosyl-L-methionine = 5-methylaminomethyl-2-thiouridine(34) in tRNA + S-adenosyl-L-homocysteine + H(+). Its function is as follows. Catalyzes the last two steps in the biosynthesis of 5-methylaminomethyl-2-thiouridine (mnm(5)s(2)U) at the wobble position (U34) in tRNA. Catalyzes the FAD-dependent demodification of cmnm(5)s(2)U34 to nm(5)s(2)U34, followed by the transfer of a methyl group from S-adenosyl-L-methionine to nm(5)s(2)U34, to form mnm(5)s(2)U34. The chain is tRNA 5-methylaminomethyl-2-thiouridine biosynthesis bifunctional protein MnmC from Histophilus somni (strain 2336) (Haemophilus somnus).